We begin with the raw amino-acid sequence, 475 residues long: Ribulose bisphosphate carboxylase large chain (475 aa).

A propeptide spanning residues 1 to 2 (MS) is cleaved from the precursor. Proline 3 bears the N-acetylproline mark. Lysine 14 carries the N6,N6,N6-trimethyllysine modification. Residues asparagine 123 and threonine 173 each coordinate substrate. Catalysis depends on lysine 175, which acts as the Proton acceptor. Lysine 177 is a substrate binding site. 3 residues coordinate Mg(2+): lysine 201, aspartate 203, and glutamate 204. At lysine 201 the chain carries N6-carboxylysine. Residue histidine 294 is the Proton acceptor of the active site. Arginine 295, histidine 327, and serine 379 together coordinate substrate.

This sequence belongs to the RuBisCO large chain family. Type I subfamily. As to quaternary structure, heterohexadecamer of 8 large chains and 8 small chains; disulfide-linked. The disulfide link is formed within the large subunit homodimers. The cofactor is Mg(2+). In terms of processing, the disulfide bond which can form in the large chain dimeric partners within the hexadecamer appears to be associated with oxidative stress and protein turnover.

The protein localises to the plastid. It localises to the chloroplast. It catalyses the reaction 2 (2R)-3-phosphoglycerate + 2 H(+) = D-ribulose 1,5-bisphosphate + CO2 + H2O. It carries out the reaction D-ribulose 1,5-bisphosphate + O2 = 2-phosphoglycolate + (2R)-3-phosphoglycerate + 2 H(+). In terms of biological role, ruBisCO catalyzes two reactions: the carboxylation of D-ribulose 1,5-bisphosphate, the primary event in carbon dioxide fixation, as well as the oxidative fragmentation of the pentose substrate in the photorespiration process. Both reactions occur simultaneously and in competition at the same active site. This chain is Ribulose bisphosphate carboxylase large chain, found in Alnus incana (White alder).